The chain runs to 156 residues: Ribosomal RNA large subunit methyltransferase H (156 aa).

Residues Leu73, Gly104, and 123–128 contribute to the S-adenosyl-L-methionine site; that span reads LSALTL.

It belongs to the RNA methyltransferase RlmH family. As to quaternary structure, homodimer.

The protein localises to the cytoplasm. The catalysed reaction is pseudouridine(1915) in 23S rRNA + S-adenosyl-L-methionine = N(3)-methylpseudouridine(1915) in 23S rRNA + S-adenosyl-L-homocysteine + H(+). Functionally, specifically methylates the pseudouridine at position 1915 (m3Psi1915) in 23S rRNA. The sequence is that of Ribosomal RNA large subunit methyltransferase H from Colwellia psychrerythraea (strain 34H / ATCC BAA-681) (Vibrio psychroerythus).